The sequence spans 955 residues: 2-oxoglutarate dehydrogenase E1 component (955 aa).

This sequence belongs to the alpha-ketoglutarate dehydrogenase family. In terms of assembly, homodimer. Part of the 2-oxoglutarate dehydrogenase (OGDH) complex composed of E1 (2-oxoglutarate dehydrogenase), E2 (dihydrolipoamide succinyltransferase) and E3 (dihydrolipoamide dehydrogenase); the complex contains multiple copies of the three enzymatic components (E1, E2 and E3). Thiamine diphosphate is required as a cofactor.

It catalyses the reaction N(6)-[(R)-lipoyl]-L-lysyl-[protein] + 2-oxoglutarate + H(+) = N(6)-[(R)-S(8)-succinyldihydrolipoyl]-L-lysyl-[protein] + CO2. Its function is as follows. E1 component of the 2-oxoglutarate dehydrogenase (OGDH) complex which catalyzes the decarboxylation of 2-oxoglutarate, the first step in the conversion of 2-oxoglutarate to succinyl-CoA and CO(2). The protein is 2-oxoglutarate dehydrogenase E1 component of Bacillus anthracis (strain A0248).